Reading from the N-terminus, the 382-residue chain is RNA exonuclease 3 (382 aa).

The 147-residue stretch at 223-369 (VLALDCEMAY…EDAIAAMDVV (147 aa)) folds into the Exonuclease domain.

It belongs to the REXO1/REXO3 family.

The protein resides in the cytoplasm. The protein localises to the nucleus. In terms of biological role, 3' to 5' exoribonuclease required for proper 3' end maturation of MRP RNA and of the U5L snRNA. This chain is RNA exonuclease 3 (REX3), found in Eremothecium gossypii (strain ATCC 10895 / CBS 109.51 / FGSC 9923 / NRRL Y-1056) (Yeast).